The sequence spans 119 residues: Ribonuclease P protein component (119 aa).

This sequence belongs to the RnpA family. Consists of a catalytic RNA component (M1 or rnpB) and a protein subunit.

It catalyses the reaction Endonucleolytic cleavage of RNA, removing 5'-extranucleotides from tRNA precursor.. Its function is as follows. RNaseP catalyzes the removal of the 5'-leader sequence from pre-tRNA to produce the mature 5'-terminus. It can also cleave other RNA substrates such as 4.5S RNA. The protein component plays an auxiliary but essential role in vivo by binding to the 5'-leader sequence and broadening the substrate specificity of the ribozyme. The polypeptide is Ribonuclease P protein component (Escherichia coli O157:H7).